The following is a 117-amino-acid chain: Large ribosomal subunit protein bL19 (117 aa).

It belongs to the bacterial ribosomal protein bL19 family.

Its function is as follows. This protein is located at the 30S-50S ribosomal subunit interface and may play a role in the structure and function of the aminoacyl-tRNA binding site. This is Large ribosomal subunit protein bL19 from Exiguobacterium sp. (strain ATCC BAA-1283 / AT1b).